A 316-amino-acid chain; its full sequence is Apolipoprotein E (316 aa).

An N-terminal signal peptide occupies residues 1-18 (MKVLWVAVVVALLAGCQA). A run of 8 repeats spans residues 79 to 100 (ALMEETMKEVKAYKEELEGQLG), 101 to 122 (PMAQETQARVSKELQAAQARLG), 123 to 144 (SDMEDLRNRLAQYRSEVQAMLG), 145 to 166 (QSTEELRARMASHLRKLRKRLL), 167 to 188 (RDADDLKKRLAVYQAGASEGAE), 189 to 210 (RSLSAVRERFGPLVEQGQSRAA), 211 to 232 (TLSTLAGQPLLERAEAWRQKLH), and 233 to 254 (GRLEEVGVRAQDRLDKIRQQLE). Residues 79–254 (ALMEETMKEV…RLDKIRQQLE (176 aa)) are 8 X 22 AA approximate tandem repeats. Position 142 is a methionine sulfoxide (Met-142). Ser-146 carries the phosphoserine; by FAM20C modification. The segment at 157–167 (HLRKLRKRLLR) is LDL and other lipoprotein receptors binding. Position 161 to 164 (161 to 164 (LRKR)) interacts with heparin. Positions 209–289 (AATLSTLAGQ…SWFEPLVEDM (81 aa)) are lipid-binding and lipoprotein association. O-linked (GalNAc...) threonine glycosylation is present at Thr-211. 228–235 (RQKLHGRL) contributes to the heparin binding site. Residues 265 to 316 (NQMRLQAEAFQARLRSWFEPLVEDMQRQWAGLVEKVQLALRPSPTSPPSENH) form a homooligomerization region. Residues 277 to 289 (RLRSWFEPLVEDM) form a specificity for association with VLDL region.

Belongs to the apolipoprotein A1/A4/E family. As to quaternary structure, homotetramer. May interact with ABCA1; functionally associated with ABCA1 in the biogenesis of HDLs. May interact with APP/A4 amyloid-beta peptide; the interaction is extremely stable in vitro but its physiological significance is unclear. May interact with MAPT. May interact with MAP2. In the cerebrospinal fluid, interacts with secreted SORL1. Interacts with PMEL; this allows the loading of PMEL luminal fragment on ILVs to induce fibril nucleation. APOE exists as multiple glycosylated and sialylated glycoforms within cells and in plasma. The extent of glycosylation and sialylation are tissue and context specific. Post-translationally, glycated in plasma VLDL. In terms of processing, phosphorylated by FAM20C in the extracellular medium.

The protein localises to the secreted. Its subcellular location is the extracellular space. It is found in the extracellular matrix. The protein resides in the extracellular vesicle. It localises to the endosome. The protein localises to the multivesicular body. Its function is as follows. APOE is an apolipoprotein, a protein associating with lipid particles, that mainly functions in lipoprotein-mediated lipid transport between organs via the plasma and interstitial fluids. APOE is a core component of plasma lipoproteins and is involved in their production, conversion and clearance. Apolipoproteins are amphipathic molecules that interact both with lipids of the lipoprotein particle core and the aqueous environment of the plasma. As such, APOE associates with chylomicrons, chylomicron remnants, very low density lipoproteins (VLDL) and intermediate density lipoproteins (IDL) but shows a preferential binding to high-density lipoproteins (HDL). It also binds a wide range of cellular receptors including the LDL receptor/LDLR and the very low-density lipoprotein receptor/VLDLR that mediate the cellular uptake of the APOE-containing lipoprotein particles. Finally, APOE also has a heparin-binding activity and binds heparan-sulfate proteoglycans on the surface of cells, a property that supports the capture and the receptor-mediated uptake of APOE-containing lipoproteins by cells. This chain is Apolipoprotein E (APOE), found in Bos mutus grunniens (Wild yak).